The primary structure comprises 220 residues: Thymidylate kinase (220 aa).

10–17 (GIDGCGKS) contacts ATP.

This sequence belongs to the thymidylate kinase family.

It catalyses the reaction dTMP + ATP = dTDP + ADP. In terms of biological role, phosphorylation of dTMP to form dTDP in both de novo and salvage pathways of dTTP synthesis. The polypeptide is Thymidylate kinase (Prochlorococcus marinus (strain SARG / CCMP1375 / SS120)).